The following is a 559-amino-acid chain: Formate--tetrahydrofolate ligase (559 aa).

68–75 (TPAGEGKS) is a binding site for ATP.

Belongs to the formate--tetrahydrofolate ligase family.

It carries out the reaction (6S)-5,6,7,8-tetrahydrofolate + formate + ATP = (6R)-10-formyltetrahydrofolate + ADP + phosphate. It participates in one-carbon metabolism; tetrahydrofolate interconversion. In Bacillus licheniformis (strain ATCC 14580 / DSM 13 / JCM 2505 / CCUG 7422 / NBRC 12200 / NCIMB 9375 / NCTC 10341 / NRRL NRS-1264 / Gibson 46), this protein is Formate--tetrahydrofolate ligase.